We begin with the raw amino-acid sequence, 247 residues long: 2,3-bisphosphoglycerate-dependent phosphoglycerate mutase (247 aa).

Substrate contacts are provided by residues 8–15 (RHGESTWN), 21–22 (TG), R60, 87–90 (ERHY), K98, 114–115 (RR), and 183–184 (GN). H9 functions as the Tele-phosphohistidine intermediate in the catalytic mechanism. The active-site Proton donor/acceptor is E87.

Belongs to the phosphoglycerate mutase family. BPG-dependent PGAM subfamily. In terms of assembly, homodimer.

The catalysed reaction is (2R)-2-phosphoglycerate = (2R)-3-phosphoglycerate. It functions in the pathway carbohydrate degradation; glycolysis; pyruvate from D-glyceraldehyde 3-phosphate: step 3/5. Its function is as follows. Catalyzes the interconversion of 2-phosphoglycerate and 3-phosphoglycerate. The protein is 2,3-bisphosphoglycerate-dependent phosphoglycerate mutase of Methylibium petroleiphilum (strain ATCC BAA-1232 / LMG 22953 / PM1).